A 167-amino-acid polypeptide reads, in one-letter code: Leukotoxin-activating lysine-acyltransferase LktC serotype A1 (167 aa).

Active-site residues include histidine 22 and aspartate 91.

It belongs to the RTX toxin acyltransferase family.

It is found in the cytoplasm. The enzyme catalyses a fatty acyl-[ACP] + L-lysyl-[protein] = N(6)-(fatty acyl)-L-lysyl-[protein] + holo-[ACP] + H(+). In terms of biological role, involved in fatty acylation of the protoxin (LktA) at two internal lysine residues, thereby converting it to the active toxin. The protein is Leukotoxin-activating lysine-acyltransferase LktC serotype A1 (lktC) of Mannheimia haemolytica (Pasteurella haemolytica).